The chain runs to 542 residues: MATQIPSKPSTSETVPTESLKERINRQMIVILDFGSQYSELIARRIRETNVYSEVLSYRTSAEQLRQLAPKGIILSGGPNSVYDKNAPQCTQEIWDLGIPILGVCYGMQLMVQQLGGKVERAKRAEYGKASLHIDDPTDLLTNVEDNSIAWMSHGDSCIELPDGFKILAHTDNTPCAAIANHEQKLFGVQFHPEVVHSVGGIALIRNFVYHICECEPTWTTEAFVEEAIREIRAKIGDKRVLLALSGGVDSSTLAFLLHRAIGDQLTCMFIDQGFMRKGEPERLMEIFDHQFHIPVVYVNSREQFLEQLKGVTDPEEKRRLIGHEFIKVFEEESNRLGPFDYLAQGTLYPDVIESADSNVDPQTGERVAVKIKSHHNVGGLPKNLRFKLVEPLRKLFKDEVRKVARSIGLPEEIVRRHPFPGPGLAIRIIGEVTSERLKILRDADFVVRDEISKQGMYHDFWQAFAVLLPVRSVGVMGDQRTYAHPVVLRLITSEDGMTADWAKVPYDLLEIISNRIVNEVRGVNRVVYDITSKPPGTIEWE.

In terms of domain architecture, Glutamine amidotransferase type-1 spans 28 to 218 (MIVILDFGSQ…VYHICECEPT (191 aa)). Cysteine 105 serves as the catalytic Nucleophile. Active-site residues include histidine 192 and glutamate 194. Residues 219–417 (WTTEAFVEEA…IGLPEEIVRR (199 aa)) enclose the GMPS ATP-PPase domain. 246–252 (SGGVDSS) is an ATP binding site.

As to quaternary structure, homodimer.

The enzyme catalyses XMP + L-glutamine + ATP + H2O = GMP + L-glutamate + AMP + diphosphate + 2 H(+). It functions in the pathway purine metabolism; GMP biosynthesis; GMP from XMP (L-Gln route): step 1/1. In terms of biological role, catalyzes the synthesis of GMP from XMP. The polypeptide is GMP synthase [glutamine-hydrolyzing] (Gloeothece citriformis (strain PCC 7424) (Cyanothece sp. (strain PCC 7424))).